A 297-amino-acid chain; its full sequence is Tyrosine recombinase XerD (297 aa).

One can recognise a Core-binding (CB) domain in the interval 1 to 86 (MNDLIEDFLH…SLRSFFHYLM (86 aa)). The 185-residue stretch at 107-291 (GLPKVLNLDD…TKLRLKDVYK (185 aa)) folds into the Tyr recombinase domain. Active-site residues include Arg-147, Lys-171, His-243, Arg-246, and His-269. Tyr-278 (O-(3'-phospho-DNA)-tyrosine intermediate) is an active-site residue.

It belongs to the 'phage' integrase family. XerD subfamily. As to quaternary structure, forms a cyclic heterotetrameric complex composed of two molecules of XerC and two molecules of XerD.

The protein resides in the cytoplasm. In terms of biological role, site-specific tyrosine recombinase, which acts by catalyzing the cutting and rejoining of the recombining DNA molecules. The XerC-XerD complex is essential to convert dimers of the bacterial chromosome into monomers to permit their segregation at cell division. It also contributes to the segregational stability of plasmids. The sequence is that of Tyrosine recombinase XerD from Listeria monocytogenes serovar 1/2a (strain ATCC BAA-679 / EGD-e).